A 122-amino-acid chain; its full sequence is Large ribosomal subunit protein uL14 (122 aa).

The protein belongs to the universal ribosomal protein uL14 family. As to quaternary structure, part of the 50S ribosomal subunit. Forms a cluster with proteins L3 and L19. In the 70S ribosome, L14 and L19 interact and together make contacts with the 16S rRNA in bridges B5 and B8.

Functionally, binds to 23S rRNA. Forms part of two intersubunit bridges in the 70S ribosome. This is Large ribosomal subunit protein uL14 from Desulforapulum autotrophicum (strain ATCC 43914 / DSM 3382 / VKM B-1955 / HRM2) (Desulfobacterium autotrophicum).